Consider the following 934-residue polypeptide: Complement component C6 (934 aa).

Positions 1 to 21 are cleaved as a signal peptide; that stretch reads MARRSVLYFILLNALINKGQA. Cystine bridges form between Cys-22–Cys-61, Cys-24–Cys-65, Cys-35–Cys-73, Cys-39–Cys-78, Cys-82–Cys-117, Cys-93–Cys-127, Cys-96–Cys-133, Cys-140–Cys-151, Cys-146–Cys-164, Cys-158–Cys-173, and Cys-180–Cys-218. 2 TSP type-1 domains span residues 22-79 and 81-134; these read CFCD…QRCP and NCLL…KLCK. Residue Trp-29 is glycosylated (C-linked (Man) tryptophan). Trp-32 carries a C-linked (Man) tryptophan; partial glycan. Residue Thr-38 is glycosylated (O-linked (Fuc...) threonine). Trp-90 carries a C-linked (Man) tryptophan; partial glycan. The 38-residue stretch at 138 to 175 folds into the LDL-receptor class A domain; the sequence is ADCKNKFRCDSGRCIARKLECNGENDCGDNSDERDCGR. Positions 156, 159, 161, 163, 169, and 170 each coordinate Ca(2+). One can recognise an MACPF domain in the interval 176 to 522; that stretch reads TKAVCTRKYN…EYAAKFDPCQ (347 aa). Residues 278–290 traverse the membrane as a beta stranded segment; sequence SFSVPIFYSSKRS. Asn-324 is a glycosylation site (N-linked (GlcNAc...) asparagine). O-linked (Fuc...) threonine glycosylation occurs at Thr-392. Cystine bridges form between Cys-399/Cys-420, Cys-499/Cys-623, Cys-521/Cys-570, Cys-523/Cys-539, Cys-526/Cys-541, Cys-543/Cys-552, Cys-577/Cys-611, Cys-589/Cys-601, Cys-644/Cys-686, Cys-672/Cys-699, Cys-704/Cys-746, Cys-732/Cys-761, Cys-773/Cys-823, Cys-784/Cys-801, Cys-786/Cys-837, and Cys-793/Cys-816. A beta stranded transmembrane segment spans residues 402-415; that stretch reads IETKKRVLFAKKTK. The 31-residue stretch at 523-553 folds into the EGF-like domain; it reads CAPCPNNGRPTLSGTECLCVCQSGTYGENCE. The TSP type-1 3 domain maps to 565-612; it reads DGQWGCWSSWSTCDATYKRSRTRECNNPAPQRGGKRCEGEKRQEEDCT. 3 C-linked (Man) tryptophan; partial glycosylation sites follow: Trp-568, Trp-571, and Trp-574. CCP stretches follow at residues 611–688 and 689–765; these read CTFS…RCLP and DGTW…EKDT. Sushi domains lie at 642–701 and 702–763; these read SGCP…ECQR and TECI…TCEK. The segment at 642–934 is C5b-binding domain; sequence SGCPQPVPPE…EILHPGKCLA (293 aa). The segment at 766–840 is factor I module (FIM) 1; it reads LTKLKGHCQL…FLHIGSCQDG (75 aa). The 60-residue stretch at 780-839 folds into the Kazal-like 1 domain; sequence SGSECICMSPEEDCSHHSEDLCVFDTDSNDYFTSPACKFLAEKCLNNQQLHFLHIGSCQD. N-linked (GlcNAc...) asparagine glycosylation is present at Asn-855. The tract at residues 858 to 934 is factor I module (FIM) 2; it reads KKESCGYDTC…EILHPGKCLA (77 aa). Cystine bridges form between Cys-862/Cys-873, Cys-867/Cys-919, Cys-880/Cys-897, Cys-882/Cys-932, and Cys-888/Cys-912. The 59-residue stretch at 876–934 folds into the Kazal-like 2 domain; the sequence is STSKCVCLLPPQCFKGGNQLYCVKMGSSTSEKTLNICEVGTIRCANRKMEILHPGKCLA.

It belongs to the complement C6/C7/C8/C9 family. As to quaternary structure, component of the membrane attack complex (MAC), composed of complement C5b, C6, C7, C8A, C8B, C8G and multiple copies of the pore-forming subunit C9. Post-translationally, all cysteine residues are assumed to be cross-linked to one another. Individual modules containing an even number of conserved cysteine residues are supposed to have disulfide linkages only within the same module.

The protein localises to the secreted. Its subcellular location is the target cell membrane. Membrane attack complex (MAC) assembly is inhibited by CD59, thereby protecting self-cells from damage during complement activation. MAC assembly is also inhibited by clusterin (CLU) chaperones that inhibit polymerization of C9. In terms of biological role, component of the membrane attack complex (MAC), a multiprotein complex activated by the complement cascade, which inserts into a target cell membrane and forms a pore, leading to target cell membrane rupture and cell lysis. The MAC is initiated by proteolytic cleavage of C5 into complement C5b in response to the classical, alternative, lectin and GZMK complement pathways. The complement pathways consist in a cascade of proteins that leads to phagocytosis and breakdown of pathogens and signaling that strengthens the adaptive immune system. Together with component C5b, involved in MAC complex assembly: complement C5b and C6 associate with the outer leaflet of target cell membrane, reducing the energy for membrane bending. This chain is Complement component C6, found in Homo sapiens (Human).